The following is a 70-amino-acid chain: uncharacterized protein (70 aa).

This is an uncharacterized protein from Thermoproteus tenax virus 1 (strain KRA1) (TTV1).